The primary structure comprises 353 residues: Methylthioribose-1-phosphate isomerase (353 aa).

D241 functions as the Proton donor in the catalytic mechanism.

This sequence belongs to the eIF-2B alpha/beta/delta subunits family. MtnA subfamily.

The protein localises to the cytoplasm. The protein resides in the nucleus. It carries out the reaction 5-(methylsulfanyl)-alpha-D-ribose 1-phosphate = 5-(methylsulfanyl)-D-ribulose 1-phosphate. Its pathway is amino-acid biosynthesis; L-methionine biosynthesis via salvage pathway; L-methionine from S-methyl-5-thio-alpha-D-ribose 1-phosphate: step 1/6. Catalyzes the interconversion of methylthioribose-1-phosphate (MTR-1-P) into methylthioribulose-1-phosphate (MTRu-1-P). The chain is Methylthioribose-1-phosphate isomerase (mri1) from Danio rerio (Zebrafish).